Reading from the N-terminus, the 510-residue chain is Lysine--tRNA ligase (510 aa).

2 residues coordinate Mg(2+): E420 and E427.

It belongs to the class-II aminoacyl-tRNA synthetase family. As to quaternary structure, homodimer. Requires Mg(2+) as cofactor.

It is found in the cytoplasm. The catalysed reaction is tRNA(Lys) + L-lysine + ATP = L-lysyl-tRNA(Lys) + AMP + diphosphate. The polypeptide is Lysine--tRNA ligase (lysS) (Vibrio cholerae serotype O1 (strain ATCC 39315 / El Tor Inaba N16961)).